A 380-amino-acid polypeptide reads, in one-letter code: Cytochrome b (380 aa).

Helical transmembrane passes span 33–53 (FGSL…FLAM), 77–98 (WLIR…FIHV), 113–133 (WNIG…GYVL), and 178–198 (FFAF…VHLL). Heme b-binding residues include His-83 and His-97. His-182 and His-196 together coordinate heme b. An a ubiquinone-binding site is contributed by His-201. The next 4 helical transmembrane spans lie at 226–246 (IKDI…VLFF), 288–308 (LGGV…PLLN), 320–340 (ITQT…WIGG), and 347–367 (FTTI…IFMP).

The protein belongs to the cytochrome b family. The cytochrome bc1 complex contains 11 subunits: 3 respiratory subunits (MT-CYB, CYC1 and UQCRFS1), 2 core proteins (UQCRC1 and UQCRC2) and 6 low-molecular weight proteins (UQCRH/QCR6, UQCRB/QCR7, UQCRQ/QCR8, UQCR10/QCR9, UQCR11/QCR10 and a cleavage product of UQCRFS1). This cytochrome bc1 complex then forms a dimer. Requires heme b as cofactor.

Its subcellular location is the mitochondrion inner membrane. Component of the ubiquinol-cytochrome c reductase complex (complex III or cytochrome b-c1 complex) that is part of the mitochondrial respiratory chain. The b-c1 complex mediates electron transfer from ubiquinol to cytochrome c. Contributes to the generation of a proton gradient across the mitochondrial membrane that is then used for ATP synthesis. The chain is Cytochrome b (MT-CYB) from Microryzomys minutus (Forest small rice rat).